Here is a 190-residue protein sequence, read N- to C-terminus: MARANEIKRGMVVNYNDKLLLVKDIDVQSPSARGASTLYKMRFSDVRTGLKVEERFKGDDILDTITLTRRTVTFSYIDGDEYVFMDDEDYTPYLFKKDQIEEELLFIPEGGMPGIQVLSWDGQIIALELPQTVDLEIVDTAPGIKGASASARNKPATMSTGLTIPVPEYLSAGEKIRIHIPERRYMGRAD.

This sequence belongs to the elongation factor P family.

The protein is Elongation factor P-like protein of Pectobacterium carotovorum subsp. carotovorum (strain PC1).